Reading from the N-terminus, the 301-residue chain is ATP synthase F(0) complex subunit B1, mitochondrial (301 aa).

Residues 1–21 (MSLSRLSSPQTFSRVFIVARG) constitute a mitochondrion transit peptide.

The protein belongs to the eukaryotic ATPase B chain family. In terms of assembly, subunit of the F-type ATPase which has 2 components, CF(1) - the catalytic core - and CF(0) - the membrane proton channel.

The protein localises to the mitochondrion. The protein resides in the mitochondrion inner membrane. In terms of biological role, mitochondrial membrane ATP synthase (F(1)F(0) ATP synthase or Complex V) produces ATP from ADP in the presence of a proton gradient across the membrane which is generated by electron transport complexes of the respiratory chain. F-type ATPases consist of two structural domains, F(1) - containing the extramembraneous catalytic core, and F(0) - containing the membrane proton channel, linked together by a central stalk and a peripheral stalk. During catalysis, ATP synthesis in the catalytic domain of F(1) is coupled via a rotary mechanism of the central stalk subunits to proton translocation. Part of the complex F(0) domain and the peripheric stalk, which acts as a stator to hold the subunits of the catalytic subcomplexes relative to the rotary elements. Plays a role in germline development. This Caenorhabditis elegans protein is ATP synthase F(0) complex subunit B1, mitochondrial.